A 172-amino-acid polypeptide reads, in one-letter code: Epithelial membrane protein 2 (172 aa).

Helical transmembrane passes span 1–21 (MLVI…LLFI), 72–92 (TMIL…LQLF), 100–120 (FVLT…GASV), and 148–168 (FILA…YMIL).

It belongs to the PMP-22/EMP/MP20 family. Interacts with PTK2; regulates PTK2 activation and localization. Interacts with ITGB3; regulates the levels of the heterodimer ITGA5-ITGB3 integrin surface expression. Interacts with P2RX7 (via C-terminus). Interacts with ITGB1; the interaction may be direct or indirect and ITGB1 has a heterodimer form. Expressed in glomeruli.

It is found in the golgi apparatus membrane. Its subcellular location is the cell membrane. The protein resides in the apical cell membrane. The protein localises to the membrane raft. It localises to the cytoplasm. It is found in the nucleus. Its subcellular location is the perinuclear region. In terms of biological role, functions as a key regulator of cell membrane composition by regulating protein surface expression. Also, plays a role in regulation of processes including cell migration, cell proliferation, cell contraction and cell adhesion. Regulates transepithelial migration of neutrophils into the alveolar lumen, potentially via mediation of cell surface expression of adhesion markers and lipid raft formation. Negatively regulates caveolae formation by reducing CAV1 expression and CAV1 amount by increasing lysosomal degradation. Facilitates surface trafficking and the formation of lipid rafts bearing GPI-anchor proteins. Regulates surface expression of MHC1 and ICAM1 proteins increasing susceptibility to T-cell mediated cytotoxicity. Regulates the plasma membrane expression of the integrin heterodimers ITGA6-ITGB1, ITGA5-ITGB3 and ITGA5-ITGB1 resulting in modulation of cell-matrix adhesion. Also regulates many processes through PTK2. Regulates blood vessel endothelial cell migration and angiogenesis by regulating VEGF protein expression through PTK2 activation. Regulates cell migration and cell contraction through PTK2 and SRC activation. Regulates focal adhesion density, F-actin conformation and cell adhesion capacity through interaction with PTK2. Positively regulates cell proliferation. Plays a role during cell death and cell blebbing. Promotes angiogenesis and vasculogenesis through induction of VEGFA via a HIF1A-dependent pathway. Also plays a role in embryo implantation by regulating surface trafficking of integrin heterodimer ITGA5-ITGB3. Plays a role in placental angiogenesis and uterine natural killer cell regulation at the maternal-fetal placental interface, however not required in the maternal tissues for a viable pregnancy. Involved in the early stages of embryogenic development and cardiogenesis, potentially via regulation of epithelial-mesenchymal transition timing. May play a role in glomerular filtration. The polypeptide is Epithelial membrane protein 2 (Emp2) (Rattus norvegicus (Rat)).